The sequence spans 448 residues: UDP-N-acetylmuramoylalanine--D-glutamate ligase (448 aa).

112–118 (GSNAKST) lines the ATP pocket.

Belongs to the MurCDEF family.

It localises to the cytoplasm. The catalysed reaction is UDP-N-acetyl-alpha-D-muramoyl-L-alanine + D-glutamate + ATP = UDP-N-acetyl-alpha-D-muramoyl-L-alanyl-D-glutamate + ADP + phosphate + H(+). It functions in the pathway cell wall biogenesis; peptidoglycan biosynthesis. In terms of biological role, cell wall formation. Catalyzes the addition of glutamate to the nucleotide precursor UDP-N-acetylmuramoyl-L-alanine (UMA). This Acinetobacter baumannii (strain AB307-0294) protein is UDP-N-acetylmuramoylalanine--D-glutamate ligase.